A 396-amino-acid chain; its full sequence is S-adenosylmethionine synthase (396 aa).

Residue His-16 participates in ATP binding. Asp-18 is a binding site for Mg(2+). Position 44 (Glu-44) interacts with K(+). L-methionine-binding residues include Glu-57 and Gln-100. A flexible loop region spans residues Gln-100–Arg-110. Residues Asp-167–Lys-169, Arg-233–Phe-234, Asp-242, Arg-248–Lys-249, Ala-265, and Lys-269 contribute to the ATP site. Residue Asp-242 participates in L-methionine binding. Lys-273 is an L-methionine binding site.

The protein belongs to the AdoMet synthase family. Homotetramer; dimer of dimers. It depends on Mg(2+) as a cofactor. K(+) is required as a cofactor.

Its subcellular location is the cytoplasm. It catalyses the reaction L-methionine + ATP + H2O = S-adenosyl-L-methionine + phosphate + diphosphate. Its pathway is amino-acid biosynthesis; S-adenosyl-L-methionine biosynthesis; S-adenosyl-L-methionine from L-methionine: step 1/1. In terms of biological role, catalyzes the formation of S-adenosylmethionine (AdoMet) from methionine and ATP. The overall synthetic reaction is composed of two sequential steps, AdoMet formation and the subsequent tripolyphosphate hydrolysis which occurs prior to release of AdoMet from the enzyme. This is S-adenosylmethionine synthase from Paraburkholderia phytofirmans (strain DSM 17436 / LMG 22146 / PsJN) (Burkholderia phytofirmans).